The primary structure comprises 380 residues: Glucose ABC transporter permease protein TsgB13 (380 aa).

A run of 10 helical transmembrane segments spans residues 20–40 (GTPV…LVAL), 59–81 (QFGL…AVYL), 94–114 (GQLL…SLPA), 115–135 (VALL…WAGI), 148–166 (IITS…SYLL), 202–222 (IPLF…VVAT), 255–275 (VYLF…IAEI), 282–301 (FRAA…ALLG), 305–325 (AVKV…GSSV), and 328–348 (AFGV…LFLI).

It belongs to the binding-protein-dependent transport system permease family. As to quaternary structure, the complex is composed of two ATP-binding proteins (TsgD13), two transmembrane proteins (TsgB13 and TsgC13) and a solute-binding protein (TsgA13).

Its subcellular location is the cell membrane. Functionally, part of an ABC transporter complex involved in glucose import. Responsible for the translocation of the substrate across the membrane. This is Glucose ABC transporter permease protein TsgB13 (tsgB13) from Haloferax volcanii (strain ATCC 29605 / DSM 3757 / JCM 8879 / NBRC 14742 / NCIMB 2012 / VKM B-1768 / DS2) (Halobacterium volcanii).